Reading from the N-terminus, the 143-residue chain is Nucleoside diphosphate kinase (143 aa).

ATP is bound by residues Lys-11, Phe-59, Arg-87, Thr-93, Arg-104, and Asn-114. His-117 functions as the Pros-phosphohistidine intermediate in the catalytic mechanism.

This sequence belongs to the NDK family. As to quaternary structure, homotetramer. It depends on Mg(2+) as a cofactor.

Its subcellular location is the cytoplasm. The enzyme catalyses a 2'-deoxyribonucleoside 5'-diphosphate + ATP = a 2'-deoxyribonucleoside 5'-triphosphate + ADP. It catalyses the reaction a ribonucleoside 5'-diphosphate + ATP = a ribonucleoside 5'-triphosphate + ADP. Major role in the synthesis of nucleoside triphosphates other than ATP. The ATP gamma phosphate is transferred to the NDP beta phosphate via a ping-pong mechanism, using a phosphorylated active-site intermediate. The polypeptide is Nucleoside diphosphate kinase (Erwinia tasmaniensis (strain DSM 17950 / CFBP 7177 / CIP 109463 / NCPPB 4357 / Et1/99)).